The primary structure comprises 277 residues: Sulfur carrier protein FdhD (277 aa).

The active-site Cysteine persulfide intermediate is Cys-121. Phe-260–Arg-265 is a Mo-bis(molybdopterin guanine dinucleotide) binding site.

The protein belongs to the FdhD family.

It localises to the cytoplasm. Required for formate dehydrogenase (FDH) activity. Acts as a sulfur carrier protein that transfers sulfur from IscS to the molybdenum cofactor prior to its insertion into FDH. This chain is Sulfur carrier protein FdhD, found in Escherichia coli O6:H1 (strain CFT073 / ATCC 700928 / UPEC).